The primary structure comprises 231 residues: Eukaryotic translation initiation factor 4E-1 (231 aa).

Positions 1 to 55 are disordered; it reads MVVEDTQKSSITDDQITANPNNENEDLEEGEILDDDDSSATSRPPSSSGALARNP. Positions 8-18 are enriched in polar residues; that stretch reads KSSITDDQITA. The segment covering 23–38 has biased composition (acidic residues); the sequence is ENEDLEEGEILDDDDS. Low complexity predominate over residues 39–48; sequence SATSRPPSSS. EIF4G-binding regions lie at residues 56 to 59 and 66 to 102; these read HPLE and FDNP…NNIH. MRNA contacts are provided by residues 74-79, lysine 106, and 124-125; these read KQAAWG and WE. Cysteine 129 and cysteine 167 form a disulfide bridge. The tract at residues 150–159 is EIF4G-binding; sequence YTLLGMIGEQ. Residues 174–179 and 219–223 contribute to the mRNA site; these read RNRQEK and KKHDR.

The protein belongs to the eukaryotic initiation factor 4E family. EIF4F is a multi-subunit complex, the composition of which varies with external and internal environmental conditions. It is composed of at least EIF4A, EIF4E and EIF4G. EIF4E is also known to interact with other partners. In higher plants two isoforms of EIF4F have been identified, named isoform EIF4F and isoform EIF(iso)4F. Isoform EIF4F has subunits p220 and p26, whereas isoform EIF(iso)4F has subunits p82 and p28. In terms of assembly, (Microbial infection) Interacts with potyvirus peanut stripe virus (PStV) helper component proteinase (HC-Pro) in the cytoplasm and with PStV viral genome-linked protein (VPg) in the nucleus; these interactions are possible in susceptible hosts but impaired in resistant plants. In terms of processing, according to the redox status, the Cys-129-Cys-167 disulfide bridge may have a role in regulating protein function by affecting its ability to bind capped mRNA. In terms of tissue distribution, expressed ubiquitously with highest levels in young leaves and roots, and lowest levels in flowers.

The protein localises to the nucleus. It localises to the cytoplasm. Its function is as follows. Component of the protein complex eIF4F, which is involved in the recognition of the mRNA cap, ATP-dependent unwinding of 5'-terminal secondary structure and recruitment of mRNA to the ribosome. Recognizes and binds the 7-methylguanosine-containing mRNA cap during an early step in the initiation of protein synthesis and facilitates ribosome binding by inducing the unwinding of the mRNAs secondary structures. Key component of recessive resistance to potyviruses such as peanut stripe virus (PStV). (Microbial infection) Susceptibility host factor required for viral infection by recruiting viral RNAs to the host ribosomal complex via an interaction with viral genome-linked protein (VPg). This is Eukaryotic translation initiation factor 4E-1 from Arachis hypogaea (Peanut).